The sequence spans 165 residues: MCSSDSLQLHNVFVYGSFQDPDVINVMLDRTPEIVSATLPGFQRFRLKGRLYPCIVPSEKGEVHGKVLMGVTSDELENLDAVEGNEYERVTVGIVREDNSEKMAVKTYMWINKADPDMFGEWNFEEWKRLHKKKFIETFKKIMECKKKPQGQGNDDISHVLREDQ.

15–20 (YGSFQD) is a binding site for substrate. Glutamate 83 acts as the Proton acceptor in catalysis.

Belongs to the gamma-glutamylcyclotransferase family. As to expression, expressed only in seeds.

In terms of biological role, putative gamma-glutamylcyclotransferase. The sequence is that of AIG2-like protein A from Arabidopsis thaliana (Mouse-ear cress).